Here is a 382-residue protein sequence, read N- to C-terminus: Protein RecA (382 aa).

Residue 79 to 86 participates in ATP binding; sequence GPESSGKT.

It belongs to the RecA family.

Its subcellular location is the cytoplasm. Can catalyze the hydrolysis of ATP in the presence of single-stranded DNA, the ATP-dependent uptake of single-stranded DNA by duplex DNA, and the ATP-dependent hybridization of homologous single-stranded DNAs. It interacts with LexA causing its activation and leading to its autocatalytic cleavage. This is Protein RecA from Streptococcus sanguinis (strain SK36).